A 425-amino-acid polypeptide reads, in one-letter code: Histidine--tRNA ligase (425 aa).

This sequence belongs to the class-II aminoacyl-tRNA synthetase family. Homodimer.

The protein localises to the cytoplasm. The enzyme catalyses tRNA(His) + L-histidine + ATP = L-histidyl-tRNA(His) + AMP + diphosphate + H(+). This is Histidine--tRNA ligase from Listeria innocua serovar 6a (strain ATCC BAA-680 / CLIP 11262).